A 466-amino-acid chain; its full sequence is Soluble pyridine nucleotide transhydrogenase (466 aa).

Residue 36–45 participates in FAD binding; the sequence is ERYHNIGGGC.

This sequence belongs to the class-I pyridine nucleotide-disulfide oxidoreductase family. It depends on FAD as a cofactor.

It localises to the cytoplasm. It catalyses the reaction NAD(+) + NADPH = NADH + NADP(+). Conversion of NADPH, generated by peripheral catabolic pathways, to NADH, which can enter the respiratory chain for energy generation. This is Soluble pyridine nucleotide transhydrogenase from Erwinia tasmaniensis (strain DSM 17950 / CFBP 7177 / CIP 109463 / NCPPB 4357 / Et1/99).